Reading from the N-terminus, the 255-residue chain is NAD(P)H-quinone oxidoreductase subunit K, chloroplastic (255 aa).

Residues Cys47, Cys48, Cys112, and Cys143 each contribute to the [4Fe-4S] cluster site.

This sequence belongs to the complex I 20 kDa subunit family. NDH is composed of at least 16 different subunits, 5 of which are encoded in the nucleus. [4Fe-4S] cluster serves as cofactor.

Its subcellular location is the plastid. It localises to the chloroplast thylakoid membrane. The enzyme catalyses a plastoquinone + NADH + (n+1) H(+)(in) = a plastoquinol + NAD(+) + n H(+)(out). It catalyses the reaction a plastoquinone + NADPH + (n+1) H(+)(in) = a plastoquinol + NADP(+) + n H(+)(out). Its function is as follows. NDH shuttles electrons from NAD(P)H:plastoquinone, via FMN and iron-sulfur (Fe-S) centers, to quinones in the photosynthetic chain and possibly in a chloroplast respiratory chain. The immediate electron acceptor for the enzyme in this species is believed to be plastoquinone. Couples the redox reaction to proton translocation, and thus conserves the redox energy in a proton gradient. The polypeptide is NAD(P)H-quinone oxidoreductase subunit K, chloroplastic (Zygnema circumcarinatum (Green alga)).